Consider the following 222-residue polypeptide: MKNNAQLLMPREKMLKFGISALTDVELLALFLRTGTRGKDVLTLAKEMLENFGSLYGLLTSEYEQFSGVHGIGVAKFAQLKGIAELARRYYNVRMREESPLLSPEMTREFLQSQLTGEEREIFMVIFLDSQHRVITHSRLFSGTLNHVEVHPREIIREAIKINASALILAHNHPSGCAEPSKADKLITERIIKSCQFMDLRVLDHIVIGRGEYVSFAERGWI.

The region spanning 100 to 222 is the MPN domain; the sequence is PLLSPEMTRE…YVSFAERGWI (123 aa). Zn(2+) contacts are provided by His171, His173, and Asp184. The JAMM motif motif lies at 171–184; that stretch reads HNHPSGCAEPSKAD.

The protein belongs to the UPF0758 family. YicR subfamily.

In Escherichia coli O45:K1 (strain S88 / ExPEC), this protein is UPF0758 protein YicR.